The primary structure comprises 248 residues: ATP synthase delta chain, chloroplastic (248 aa).

Residues 1-60 constitute a chloroplast transit peptide; sequence MAALQQTPITFQSRSPPPTQIISGPTAKLSFSGGLKLPKLTIKLRSNRTSRRGGGAAGSK.

Belongs to the ATPase delta chain family. As to quaternary structure, F-type ATPases have 2 components, CF(1) - the catalytic core - and CF(0) - the membrane proton channel. CF(1) has five subunits: alpha(3), beta(3), gamma(1), delta(1), epsilon(1). CF(0) has three main subunits: a, b and c.

Its subcellular location is the plastid. The protein resides in the chloroplast thylakoid membrane. This protein seems to be part of the stalk that links CF(0) to CF(1). It either transmits conformational changes from CF(0) into CF(1) or is implicated in proton conduction. The protein is ATP synthase delta chain, chloroplastic (ATPD) of Nicotiana tabacum (Common tobacco).